The following is a 505-amino-acid chain: Glutamate--tRNA ligase (505 aa).

Positions 12–22 (PSPTGALHIGG) match the 'HIGH' region motif. Positions 260–264 (KLSKR) match the 'KMSKS' region motif. Position 263 (Lys-263) interacts with ATP.

The protein belongs to the class-I aminoacyl-tRNA synthetase family. Glutamate--tRNA ligase type 1 subfamily. In terms of assembly, monomer.

Its subcellular location is the cytoplasm. The enzyme catalyses tRNA(Glu) + L-glutamate + ATP = L-glutamyl-tRNA(Glu) + AMP + diphosphate. Its function is as follows. Catalyzes the attachment of glutamate to tRNA(Glu) in a two-step reaction: glutamate is first activated by ATP to form Glu-AMP and then transferred to the acceptor end of tRNA(Glu). This is Glutamate--tRNA ligase from Phocaeicola vulgatus (strain ATCC 8482 / DSM 1447 / JCM 5826 / CCUG 4940 / NBRC 14291 / NCTC 11154) (Bacteroides vulgatus).